We begin with the raw amino-acid sequence, 65 residues long: Putative potassium channel toxin Ts21 (65 aa).

Residues 1 to 25 (MNKVYLVAILVLSVLLVANVSPIEG) form the signal peptide. 3 disulfides stabilise this stretch: C31–C53, C38–C61, and C42–C63.

This sequence belongs to the short scorpion toxin superfamily. Potassium channel inhibitor family. Alpha-KTx 11 subfamily. In terms of tissue distribution, expressed by the venom gland.

The protein resides in the secreted. In terms of biological role, this recombinant toxin inhibits the mammalian voltage-gated potassium channels Kv1.3/KCNA3 in vitro with an IC(50) of 26.40 nM. The sequence is that of Putative potassium channel toxin Ts21 from Tityus serrulatus (Brazilian scorpion).